The primary structure comprises 558 residues: Glutamine-dependent NAD(+) synthetase (558 aa).

The CN hydrolase domain occupies 2-262 (FTIALAQLNP…LALLSYDLSS (261 aa)). Glutamate 42 acts as the Proton acceptor; for glutaminase activity in catalysis. Catalysis depends on lysine 117, which acts as the For glutaminase activity. Residue tyrosine 123 participates in L-glutamine binding. The active-site Nucleophile; for glutaminase activity is the cysteine 153. The L-glutamine site is built by serine 190 and lysine 196. Residues 284–558 (ALVLGVGDYL…IAQAFHPQGS (275 aa)) are ligase. Position 304–311 (304–311 (GLSGGIDS)) interacts with ATP. Residue asparagine 387 participates in deamido-NAD(+) binding. ATP is bound at residue threonine 411. Glutamate 416 and lysine 526 together coordinate deamido-NAD(+).

It in the C-terminal section; belongs to the NAD synthetase family.

The catalysed reaction is deamido-NAD(+) + L-glutamine + ATP + H2O = L-glutamate + AMP + diphosphate + NAD(+) + H(+). It participates in cofactor biosynthesis; NAD(+) biosynthesis; NAD(+) from deamido-NAD(+) (L-Gln route): step 1/1. Functionally, catalyzes the ATP-dependent amidation of deamido-NAD to form NAD. Uses L-glutamine as a nitrogen source. This chain is Glutamine-dependent NAD(+) synthetase, found in Synechocystis sp. (strain ATCC 27184 / PCC 6803 / Kazusa).